A 634-amino-acid chain; its full sequence is Ankyrin repeat protein OPG025 (634 aa).

ANK repeat units follow at residues 36–69, 70–100, 103–134, 175–211, 307–337, and 412–441; these read DGETPLKAYVTKKNNNIKNDVVILLLSSVDYKNI, NDFDIFEYLCSDNIDIDLLKLLISKGIEINS, NGINIVEKYATTSNPNVDVFKLLLDKGIPTCS, MGKTVLYYYIITRSQDGYATSLDVINYLISHKKEMRY, IQDLLLEYVSYHTVYINVIKCMIDEGATLYR, and HGCSILYHCIKSHSVSLVEWLIDNGADINI.

The protein belongs to the orthopoxvirus OPG025 family. In terms of assembly, interacts with components of host SCF complex CUL1 and SKP1 and components of the cullin deneddylation/COP9 signalosome complex subunits COPS7A and COPS7B.

Functionally, plays a role in the inhibition of host immune repsonse by counteracting the action of interferons on early events in the viral replication cycle. In Vaccinia virus (strain Western Reserve) (VACV), this protein is Ankyrin repeat protein OPG025 (OPG035).